The chain runs to 282 residues: Putative 23S rRNA (guanine-N(1)-)-methyltransferase YxjB (282 aa).

Cysteine 12, cysteine 15, cysteine 29, and histidine 34 together coordinate Zn(2+). 103–104 (EG) is an S-adenosyl-L-methionine binding site.

The protein belongs to the methyltransferase superfamily. RlmA family.

The sequence is that of Putative 23S rRNA (guanine-N(1)-)-methyltransferase YxjB (yxjB) from Bacillus subtilis (strain 168).